The primary structure comprises 428 residues: MLDIKLFREQADTVKSKIELRGDDPKVVDEVLELDNERRQLIGKTEEMKARRNKVSEEIAEKKRNKENADDVIKEMRELGDEIKENDAKLNEVDNKVRDILIRIPNLIAEDVPQGDSDEENVEVKKWGTPREFDFEPKAHWDLVEELKMADFERAAKISGARFVYLTKDGALLERALMNYMLTKHTTQHGYTEMMTPQLVNADTMFGTGQLPKFEEDLFKVEKEGLYTIPTAEVPLTNFYRDEIIQPGVLPEKFTAQTACFRSEAGSAGRDTRGLIRLHQFDKVEMVRIEKPEDSWDALEDMTQNAEAILEELGLPYRRVILCTGDIGFSASKTYDLEVWLPSYDNYKEISSCSNCTDFQARRANIRFKRDAASKPELAHTLNGSGLAVGRTFAAIVENYQNADGSITIPEALVPFMGGKTEIRPVND.

L-serine is bound at residue 231-233; that stretch reads TAE. 262–264 is an ATP binding site; the sequence is RSE. Glu-285 is an L-serine binding site. Residue 349–352 participates in ATP binding; the sequence is EISS. An L-serine-binding site is contributed by Ser-385.

It belongs to the class-II aminoacyl-tRNA synthetase family. Type-1 seryl-tRNA synthetase subfamily. As to quaternary structure, homodimer. The tRNA molecule binds across the dimer.

It is found in the cytoplasm. The catalysed reaction is tRNA(Ser) + L-serine + ATP = L-seryl-tRNA(Ser) + AMP + diphosphate + H(+). It catalyses the reaction tRNA(Sec) + L-serine + ATP = L-seryl-tRNA(Sec) + AMP + diphosphate + H(+). It participates in aminoacyl-tRNA biosynthesis; selenocysteinyl-tRNA(Sec) biosynthesis; L-seryl-tRNA(Sec) from L-serine and tRNA(Sec): step 1/1. Functionally, catalyzes the attachment of serine to tRNA(Ser). Is also able to aminoacylate tRNA(Sec) with serine, to form the misacylated tRNA L-seryl-tRNA(Sec), which will be further converted into selenocysteinyl-tRNA(Sec). The sequence is that of Serine--tRNA ligase from Staphylococcus haemolyticus (strain JCSC1435).